Here is a 518-residue protein sequence, read N- to C-terminus: MSFKVNWNTLETDSLREWTSQLLTDALNSGKRPPILASDIQIKDLNFGKVAPDFEILDIGELDSDRFRGIFKINYSGDFHLTLHTRVQANPLTIYQENSNASDAAFVTPNFLLASDPFALPLDLKLSDIRISGIGIIVFSRLKGLTLVFRNDPLDSIKVTSTFDTVQVLAKFLQNQIETQIRDLFRETLPTLIHRLSLKYLSSDDSSFLDDLRPQLAALHEETVSLMDIDPDVPYSPENLSRVSALFKSRETLRLAVPKIRHSVQRCRLEKFTKTQPSLVRCLHDNLNLDLVAAPQHTNEIPVELVSGADFSKTNHVLREISSIQASNYYRSSSSRPKRRVIKLGSKKSSVKSTPSAETLASPIPSEMSSATASEHVSPTKYYQNDSHISLYHPKPRQADGAAALQLANPQSYLYHNVSSTPQLPSNSSLLAGIGLGNNYFNFASQSQISTSPIRRSSQELEDKKVTGKKSINHLDIAQLNSKLNATLHTIPDVKSHPGTGRKLDTGFEMPPPPPYQV.

An SMP-LTD domain is found at Met-1 to Leu-198. Disordered regions lie at residues Ser-335–Ser-369 and Ile-491–Val-518. Basic residues predominate over residues Arg-336–Ser-350. Residues Pro-492–Thr-506 are compositionally biased toward basic and acidic residues.

The protein belongs to the MDM34 family. As to quaternary structure, component of the ER-mitochondria encounter structure (ERMES) or MDM complex, composed of MMM1, MDM10, MDM12 and MDM34.

It is found in the mitochondrion outer membrane. Its function is as follows. Component of the ERMES/MDM complex, which serves as a molecular tether to connect the endoplasmic reticulum (ER) and mitochondria. Components of this complex are involved in the control of mitochondrial shape and protein biogenesis, and function in nonvesicular lipid trafficking between the ER and mitochondria. MDM34 is required for the interaction of the ER-resident membrane protein MMM1 and the outer mitochondrial membrane-resident beta-barrel protein MDM10. The protein is Mitochondrial distribution and morphology protein 34 of Meyerozyma guilliermondii (strain ATCC 6260 / CBS 566 / DSM 6381 / JCM 1539 / NBRC 10279 / NRRL Y-324) (Yeast).